The sequence spans 1238 residues: Topoisomerase 1-associated factor 1 (1238 aa).

Phosphoserine occurs at positions 626 and 654. Residues 1008–1051 (GIARSKKKDKRKRRKGEAKTNLPMFGDQDDERPQTVRERHGVFS) form a disordered region. Residues 1010-1023 (ARSKKKDKRKRRKG) are compositionally biased toward basic residues. A compositionally biased stretch (basic and acidic residues) spans 1038 to 1050 (ERPQTVRERHGVF). Phosphoserine occurs at positions 1056 and 1058. The segment at 1159–1218 (NNNNNQLSDDDVNSESRNSLGSSQPSNSQNMFQSEVYSRKESTKRSLEASAADESDEDEE) is disordered. The span at 1173-1194 (ESRNSLGSSQPSNSQNMFQSEV) shows a compositional bias: polar residues. Residues 1195-1205 (YSRKESTKRSL) show a composition bias toward basic and acidic residues. Residues 1209 to 1218 (AADESDEDEE) are compositionally biased toward acidic residues. At serine 1213 the chain carries Phosphoserine.

This sequence belongs to the timeless family. Component of the fork protection complex (FPC) consisting of TOF1 and CSM3. Interacts with WSS1 and ESC4.

The protein localises to the nucleus. Forms a fork protection complex (FPC) with CSM3 and which is required for chromosome segregation during meiosis and DNA damage repair. FPC coordinates leading and lagging strand synthesis and moves with the replication fork. FPC stabilizes replication forks in a configuration that is recognized by replication checkpoint sensors and protects stalled replication forks against the fork-releasing activity of RRM3 helicase. The polypeptide is Topoisomerase 1-associated factor 1 (TOF1) (Saccharomyces cerevisiae (strain ATCC 204508 / S288c) (Baker's yeast)).